Reading from the N-terminus, the 150-residue chain is UPF0178 protein Reut_B5138 (150 aa).

Belongs to the UPF0178 family.

The chain is UPF0178 protein Reut_B5138 from Cupriavidus pinatubonensis (strain JMP 134 / LMG 1197) (Cupriavidus necator (strain JMP 134)).